The following is a 578-amino-acid chain: Vacuolar protein 8 (578 aa).

A lipid anchor (N-myristoyl glycine) is attached at Gly-2. Residues Cys-4, Cys-5, and Cys-7 are each lipidated (S-palmitoyl cysteine). 2 positions are modified to phosphoserine: Ser-11 and Ser-16. 9 ARM repeats span residues 37-75 (DKDQ…AEIT), 76-114 (EKYV…NLAV), 116-155 (NENK…NLAT), 157-196 (DDNK…NMTH), 198-237 (EENR…NIAV), 239-280 (EANR…NLAS), 282-321 (TSYQ…NISI), 323-363 (PLNE…NLAA), and 407-446 (DVSK…NLCS). Lys-77 participates in a covalent cross-link: Glycyl lysine isopeptide (Lys-Gly) (interchain with G-Cter in ubiquitin). Lys-515 is covalently cross-linked (Glycyl lysine isopeptide (Lys-Gly) (interchain with G-Cter in ubiquitin)). The disordered stretch occupies residues 527–557 (SGIDVKNPGSNNNPSSNDNNSNNNDTGSEHQ). Residues 533-552 (NPGSNNNPSSNDNNSNNNDT) are compositionally biased toward low complexity.

This sequence belongs to the beta-catenin family. Interacts with NVJ1. Forms heterotetramers of two VAC8 and two NVJ1 or two VAC8 and two ATG13. Post-translationally, palmitoylated on one or more of its N-terminal cysteine residues by PFA3, which is required for vacuole fusion.

The protein localises to the vacuole membrane. Functionally, functions in both vacuole inheritance and protein targeting from the cytoplasm to vacuole (cvt). Involved in the formation of nucleus-vacuole junctions (NVJs) during piecemeal microautophagy of the nucleus (PMN). NVJs are interorganelle interfaces mediated by NVJ1 in the nuclear envelope and VAC8 on the vacuole membrane. Together, NVJ1 and VAC8 form Velcro-like patches through which teardrop-like portions of the nucleus are pinched off into the vacuolar lumen and degraded by the PMN process. The polypeptide is Vacuolar protein 8 (VAC8) (Saccharomyces cerevisiae (strain ATCC 204508 / S288c) (Baker's yeast)).